The sequence spans 179 residues: DELTA-miturgitoxin-Cp2a (179 aa).

The N-terminal stretch at 1-20 (MKFSLFFGVLFLAILHSCLS) is a signal peptide. Positions 21–47 (ESEKDLTDEDHFRSSDSFLSEIQEESR) are excised as a propeptide. The Processing quadruplet motif motif lies at 44-47 (EESR). Disulfide bonds link C51–C66, C58–C75, C65–C88, C77–C86, C115–C130, C122–C139, C129–C158, and C141–C156. The residue at position 178 (V178) is a Valine amide.

It belongs to the spider toxin CSTX family. Double-CSTX subfamily. In terms of processing, cleavage of the propeptide depends on the processing quadruplet motif (XXXR, with at least one of X being E). As to expression, expressed by the venom gland.

It localises to the secreted. In terms of biological role, spider venom toxin that exhibits cytolytic activity by forming an alpha-helix across the membrane. Lethal to insect larvae. This is DELTA-miturgitoxin-Cp2a from Cheiracanthium punctorium (Yellow sac spider).